We begin with the raw amino-acid sequence, 132 residues long: Small ribosomal subunit protein uS8 (132 aa).

The protein belongs to the universal ribosomal protein uS8 family. As to quaternary structure, part of the 30S ribosomal subunit. Contacts proteins S5 and S12.

One of the primary rRNA binding proteins, it binds directly to 16S rRNA central domain where it helps coordinate assembly of the platform of the 30S subunit. This is Small ribosomal subunit protein uS8 from Streptococcus uberis (strain ATCC BAA-854 / 0140J).